A 275-amino-acid polypeptide reads, in one-letter code: Taurine transport system permease protein TauC (275 aa).

Helical transmembrane passes span 20 to 42 (LSRQ…WTVA), 87 to 107 (IMLA…AMGL), 124 to 144 (PVPP…GETS), 146 to 166 (ILLI…AGVK), 186 to 206 (VLWF…LRIG), 209 to 229 (VGWS…LGFM), and 236 to 256 (FLAT…AFLL). The 185-residue stretch at 80 to 264 (LAASLTRIML…LLELGLRALQ (185 aa)) folds into the ABC transmembrane type-1 domain.

This sequence belongs to the binding-protein-dependent transport system permease family. CysTW subfamily.

The protein localises to the cell inner membrane. In terms of biological role, part of a binding-protein-dependent transport system for taurine. Probably responsible for the translocation of the substrate across the membrane. This chain is Taurine transport system permease protein TauC (tauC), found in Escherichia coli (strain K12).